A 215-amino-acid polypeptide reads, in one-letter code: Pyrrolidone-carboxylate peptidase (215 aa).

Residues Glu80, Cys143, and His167 contribute to the active site.

This sequence belongs to the peptidase C15 family. As to quaternary structure, homotetramer.

The protein localises to the cytoplasm. It carries out the reaction Release of an N-terminal pyroglutamyl group from a polypeptide, the second amino acid generally not being Pro.. In terms of biological role, removes 5-oxoproline from various penultimate amino acid residues except L-proline. This is Pyrrolidone-carboxylate peptidase from Pectobacterium atrosepticum (strain SCRI 1043 / ATCC BAA-672) (Erwinia carotovora subsp. atroseptica).